Reading from the N-terminus, the 224-residue chain is Leucyl/phenylalanyl-tRNA--protein transferase (224 aa).

It belongs to the L/F-transferase family.

It is found in the cytoplasm. It catalyses the reaction N-terminal L-lysyl-[protein] + L-leucyl-tRNA(Leu) = N-terminal L-leucyl-L-lysyl-[protein] + tRNA(Leu) + H(+). The enzyme catalyses N-terminal L-arginyl-[protein] + L-leucyl-tRNA(Leu) = N-terminal L-leucyl-L-arginyl-[protein] + tRNA(Leu) + H(+). The catalysed reaction is L-phenylalanyl-tRNA(Phe) + an N-terminal L-alpha-aminoacyl-[protein] = an N-terminal L-phenylalanyl-L-alpha-aminoacyl-[protein] + tRNA(Phe). Functions in the N-end rule pathway of protein degradation where it conjugates Leu, Phe and, less efficiently, Met from aminoacyl-tRNAs to the N-termini of proteins containing an N-terminal arginine or lysine. This chain is Leucyl/phenylalanyl-tRNA--protein transferase, found in Rhodopseudomonas palustris (strain HaA2).